Consider the following 216-residue polypeptide: ATP phosphoribosyltransferase (216 aa).

It belongs to the ATP phosphoribosyltransferase family. Short subfamily. As to quaternary structure, heteromultimer composed of HisG and HisZ subunits.

The protein localises to the cytoplasm. It carries out the reaction 1-(5-phospho-beta-D-ribosyl)-ATP + diphosphate = 5-phospho-alpha-D-ribose 1-diphosphate + ATP. Its pathway is amino-acid biosynthesis; L-histidine biosynthesis; L-histidine from 5-phospho-alpha-D-ribose 1-diphosphate: step 1/9. In terms of biological role, catalyzes the condensation of ATP and 5-phosphoribose 1-diphosphate to form N'-(5'-phosphoribosyl)-ATP (PR-ATP). Has a crucial role in the pathway because the rate of histidine biosynthesis seems to be controlled primarily by regulation of HisG enzymatic activity. The chain is ATP phosphoribosyltransferase from Lachnospira eligens (strain ATCC 27750 / DSM 3376 / VPI C15-48 / C15-B4) (Eubacterium eligens).